Consider the following 221-residue polypeptide: Iron-sulfur cluster repair protein YtfE (221 aa).

It belongs to the RIC family. YtfE subfamily. As to quaternary structure, homodimer.

The protein resides in the cytoplasm. Its function is as follows. Di-iron-containing protein involved in the repair of iron-sulfur clusters damaged by oxidative and nitrosative stress conditions. The protein is Iron-sulfur cluster repair protein YtfE of Cronobacter sakazakii (strain ATCC BAA-894) (Enterobacter sakazakii).